The chain runs to 156 residues: AP-1 complex subunit sigma-1 (156 aa).

It belongs to the adaptor complexes small subunit family. As to quaternary structure, adaptor protein complex 1 (AP-1) is a heterotetramer composed of two large adaptins (gamma-type subunit and beta-type subunit), a medium adaptin (mu-type subunit) and a small adaptin (sigma-type subunit).

It localises to the golgi apparatus. The protein resides in the trans-Golgi network. The protein localises to the cytoplasmic vesicle. Its subcellular location is the clathrin-coated vesicle membrane. Subunit of clathrin-associated adaptor protein complex 1 that plays a role in protein sorting in the trans-Golgi network (TGN) and endosomes. The AP complexes mediate the recruitment of clathrin to membranes and the recognition of sorting signals within the cytosolic tails of transmembrane cargo molecules. Also involved in early steps of phagocytosis and macropinocytosis. This Dictyostelium discoideum (Social amoeba) protein is AP-1 complex subunit sigma-1 (ap1s1).